A 60-amino-acid chain; its full sequence is MAKVRITQVRSTIKCPMRQKLTIKALKLGRINKSVELEFTPQIQGMVRQVHHLVTTENIA.

Belongs to the universal ribosomal protein uL30 family. Part of the 50S ribosomal subunit.

The sequence is that of Large ribosomal subunit protein uL30 from Amoebophilus asiaticus (strain 5a2).